The chain runs to 526 residues: Aspartate ammonia-lyase (526 aa).

Positions 1–44 (MSKTSNKSSADSKNDAKAEDIVNGENQIATNESQSSDSAAVSER) are disordered. Residues 10–20 (ADSKNDAKAED) are compositionally biased toward basic and acidic residues. A compositionally biased stretch (polar residues) spans 24 to 39 (GENQIATNESQSSDSA). L-aspartate is bound by residues Thr-155, Ser-194, Thr-195, Asn-196, and Thr-241. The interval 371 to 380 (GSSIMPAKVN) is SS loop. Ser-372 (proton acceptor) is an active-site residue. Residues Ser-373 and Lys-378 each contribute to the L-aspartate site.

This sequence belongs to the class-II fumarase/aspartase family. Aspartase subfamily. In terms of assembly, homotetramer.

The enzyme catalyses L-aspartate = fumarate + NH4(+). Its function is as follows. Catalyzes the reversible conversion of L-aspartate to fumarate and ammonia. The sequence is that of Aspartate ammonia-lyase from Corynebacterium glutamicum (strain ATCC 13032 / DSM 20300 / JCM 1318 / BCRC 11384 / CCUG 27702 / LMG 3730 / NBRC 12168 / NCIMB 10025 / NRRL B-2784 / 534).